A 223-amino-acid chain; its full sequence is Uracil-DNA glycosylase (223 aa).

Residue Asp61 is the Proton acceptor of the active site.

The protein belongs to the uracil-DNA glycosylase (UDG) superfamily. UNG family.

Its subcellular location is the cytoplasm. The enzyme catalyses Hydrolyzes single-stranded DNA or mismatched double-stranded DNA and polynucleotides, releasing free uracil.. Functionally, excises uracil residues from the DNA which can arise as a result of misincorporation of dUMP residues by DNA polymerase or due to deamination of cytosine. The chain is Uracil-DNA glycosylase from Haemophilus ducreyi (strain 35000HP / ATCC 700724).